A 565-amino-acid polypeptide reads, in one-letter code: Beta-hexosaminidase subunit beta (565 aa).

The first 13 residues, 1–13, serve as a signal peptide directing secretion; the sequence is MIVLLLLISYCFA. N-linked (GlcNAc...) asparagine glycosylation occurs at N71. The Proton donor role is filled by E347.

This sequence belongs to the glycosyl hydrolase 20 family. As to quaternary structure, heterodimer of one alpha subunit and one beta subunit. In terms of processing, glycosylated.

The protein resides in the cytoplasmic granule. It is found in the secreted. The enzyme catalyses Hydrolysis of terminal non-reducing N-acetyl-D-hexosamine residues in N-acetyl-beta-D-hexosaminides.. In terms of biological role, hydrolyzes the non-reducing end N-acetyl-D-hexosamine and/or sulfated N-acetyl-D-hexosamine of glycoconjugates. May contribute to amoebic pathogenicity and may be involved in the destruction of extracellular matrix components. This is Beta-hexosaminidase subunit beta from Entamoeba histolytica (strain ATCC 30459 / HM-1:IMSS / ABRM).